The following is a 360-amino-acid chain: MKATIIFLLLAQVSWAGPFQQRGLFDFMLEDEASGIGPEDRAPDMPDLELLGPVCPFRCQCHLRVVQCSDLGLDKVPKDLPPDTTLLDLQNNKITEIKDGDFKNLKNLHTLILVNNKISKISPGAFTPLLKLERLYLSKNHLKELPEKMPKTLQELRAHENEITKVRKAVFNGLNQMIVVELGTNPLKSSGIENGAFQGMKKLSYIRIADTNITTIPQGLPPSLTELHLEGNKITKVDASSLKGLNNLAKLGLSFNSISAVDNGTLANTPHLRELHLDNNKLIRVPGGLAEHKYIQVVYLHNNNISAVGSNDFCPPGYNTKKASYSGVSLFSNPVQYWEIQPSTFRCVYVRSAIQLGNYK.

The N-terminal stretch at 1 to 16 (MKATIIFLLLAQVSWA) is a signal peptide. Positions 17-30 (GPFQQRGLFDFMLE) are excised as a propeptide. O-linked (Xyl...) (glycosaminoglycan) serine glycosylation occurs at Ser34. 2 disulfide bridges follow: Cys55-Cys61 and Cys59-Cys68. 12 LRR repeats span residues 74-94 (DKVP…NNKI), 95-118 (TEIK…NNKI), 119-142 (SKIS…KNHL), 143-163 (KELP…ENEI), 164-187 (TKVR…TNPL), 188-213 (KSSG…DTNI), 214-234 (TTIP…GNKI), 235-258 (TKVD…FNSI), 259-282 (SAVD…NNKL), 283-305 (IRVP…NNNI), 306-335 (SAVG…SNPV), and 336-360 (QYWE…GNYK). Asn212 carries N-linked (GlcNAc...) asparagine glycosylation. Asn263 and Asn304 each carry an N-linked (GlcNAc...) asparagine glycan. Cys314 and Cys347 form a disulfide bridge.

It belongs to the small leucine-rich proteoglycan (SLRP) family. SLRP class I subfamily. In terms of assembly, binds to type I and type II collagen, fibronectin and TGF-beta. Forms a ternary complex with MFAP2 and ELN. Interacts with DPT. The attached glycosaminoglycan chain can be either chondroitin sulfate or dermatan sulfate depending upon the tissue of origin.

It is found in the secreted. It localises to the extracellular space. The protein localises to the extracellular matrix. In terms of biological role, may affect the rate of fibrils formation. In Canis lupus familiaris (Dog), this protein is Decorin (DCN).